Reading from the N-terminus, the 352-residue chain is tRNA pseudouridine synthase D (352 aa).

The active-site Nucleophile is the D81. A TRUD domain is found at G157 to L303.

It belongs to the pseudouridine synthase TruD family.

The enzyme catalyses uridine(13) in tRNA = pseudouridine(13) in tRNA. In terms of biological role, responsible for synthesis of pseudouridine from uracil-13 in transfer RNAs. The sequence is that of tRNA pseudouridine synthase D from Pseudomonas syringae pv. syringae (strain B728a).